A 1571-amino-acid chain; its full sequence is Neurexin-3 (1571 aa).

The N-terminal stretch at 1–27 (MSFTLHSVFFTLKVSIFLGSLVGLCLG) is a signal peptide. The Laminin G-like 1 domain maps to 28-202 (LEFMGLPNQW…SVQLEAEGPC (175 aa)). The Extracellular segment spans residues 28–1496 (LEFMGLPNQW…EVIRESSSTT (1469 aa)). Residues Asn58 and Asn105 are each glycosylated (N-linked (GlcNAc...) asparagine). Positions 198–235 (AEGPCGERPCENGGICFLLDGHPTCDCSTTGYGGTLCS) constitute an EGF-like 1 domain. 3 cysteine pairs are disulfide-bonded: Cys202–Cys213, Cys207–Cys222, and Cys224–Cys234. Laminin G-like domains follow at residues 258–440 (VATF…VFKC) and 447–639 (DPIN…KSSC). Residues Asp304, Leu321, and Met374 each coordinate Ca(2+). Cystine bridges form between Cys404–Cys440, Cys610–Cys639, Cys647–Cys658, Cys652–Cys667, and Cys669–Cys679. Positions 643-680 (SAKQCDSYPCKNNAVCKDGWNRFICDCTGTGYWGRTCE) constitute an EGF-like 2 domain. 2 consecutive Laminin G-like domains span residues 685–857 (ILSY…IDYC) and 871–1046 (DPVT…ERGC). Residues Asp732 and Leu749 each coordinate Ca(2+). N-linked (GlcNAc...) asparagine glycosylation is present at Asn757. Arg807 contributes to the Ca(2+) binding site. Cystine bridges form between Cys1018/Cys1046, Cys1053/Cys1064, Cys1058/Cys1073, and Cys1075/Cys1085. The EGF-like 3 domain occupies 1049 to 1086 (PSTTCQEDSCANQGVCMQQWEGFTCDCSMTSYSGNQCN). A Laminin G-like 6 domain is found at 1090-1290 (ATYIFGKSGG…NPNIKINGSV (201 aa)). Asp1142 and Ile1159 together coordinate Ca(2+). Residue Asn1189 is glycosylated (N-linked (GlcNAc...) asparagine). Ca(2+)-binding residues include Ile1241 and Asn1243. N-linked (GlcNAc...) asparagine glycans are attached at residues Asn1287 and Asn1331. Positions 1324–1348 (ATTTTRKNRSTASIQPTSDDLVSSA) are disordered. Residues 1333-1348 (STASIQPTSDDLVSSA) are compositionally biased toward polar residues. A glycan (O-linked (Xyl...) (heparan sulfate) serine) is linked at Ser1347. Residues 1497–1517 (GMVVGIVAAAALCILILLYAM) traverse the membrane as a helical segment. The Cytoplasmic portion of the chain corresponds to 1518 to 1571 (YKYRNRDEGSYQVDETRNYISNSAQSNGTLMKEKQASSKSGHKKQKNKDKEYYV). The segment at 1539–1571 (NSAQSNGTLMKEKQASSKSGHKKQKNKDKEYYV) is disordered.

It belongs to the neurexin family. As to quaternary structure, the laminin G-like domain 2 binds to NXPH1. Specific isoforms bind to alpha-dystroglycan. The cytoplasmic C-terminal region binds to CASK. Specific isoforms bind neuroligins NLGN1, NLGN2 and NLGN3. Interacts with CLSTN3. In terms of processing, O-glycosylated; contains heparan sulfate. Heparan sulfate attachment is required for synapse development by mediating interactions with neuroligins. As to expression, brain and arteries (at protein level).

It is found in the presynaptic cell membrane. Neuronal cell surface protein that may be involved in cell recognition and cell adhesion. May mediate intracellular signaling. This chain is Neurexin-3 (Nrxn3), found in Mus musculus (Mouse).